The following is a 392-amino-acid chain: Acyl-CoA dehydrogenase IpdE1 (392 aa).

Residues 126 to 129 and serine 171 each bind FAD; that span reads QGYS. Catalysis depends on glutamate 254, which acts as the Proton acceptor. 371 to 373 is an FAD binding site; that stretch reads SNE.

It belongs to the acyl-CoA dehydrogenase family. In terms of assembly, heterotetramer composed of 2 IpdE1 subunits and 2 IpdE2 subunits. FAD is required as a cofactor.

It carries out the reaction 3-[(3aS,4S,5R,7aS)-5-hydroxy-7a-methyl-1-oxo-octahydro-1H-inden-4-yl]propanoyl-CoA + A = (2E)-3-[(3aS,4S,5R,7aS)-5-hydroxy-7a-methyl-1-oxo-octahydro-1H-inden-4-yl]prop-2-enoyl-CoA + AH2. It participates in steroid metabolism; cholesterol degradation. Its function is as follows. Involved in cholesterol degradation. Catalyzes the dehydrogenation of 5OH-HIP-CoA to 5OH-HIPE-CoA. This chain is Acyl-CoA dehydrogenase IpdE1, found in Mycolicibacterium smegmatis (strain ATCC 700084 / mc(2)155) (Mycobacterium smegmatis).